Reading from the N-terminus, the 380-residue chain is Calreticulin-3 (380 aa).

The N-terminal stretch at Met-1–Ala-19 is a signal peptide. An N-domain region spans residues Thr-20–Glu-197. An N-linked (GlcNAc...) asparagine glycan is attached at Asn-42. Tyr-109, Lys-111, Tyr-128, and Asp-135 together coordinate an alpha-D-glucoside. A disulfide bond links Cys-137 and Cys-163. Repeat copies occupy residues Ile-191 to Leu-202, Glu-209 to Gln-220, Glu-222 to Lys-231, Asp-235 to Ser-246, Gly-250 to Pro-256, Asp-260 to Asp-268, and Asp-270 to Ala-280. The 4 X approximate repeats stretch occupies residues Ile-191–Ser-246. Residues Tyr-198–Phe-291 form a P-domain region. A glycan (N-linked (GlcNAc...) asparagine) is linked at Asn-201. Residues Gly-250 to Ala-280 are 3 X approximate repeats. The interval Glu-292 to Leu-380 is C-domain. Glu-300 lines the an alpha-D-glucoside pocket. Positions Gln-377 to Leu-380 match the Prevents secretion from ER motif.

This sequence belongs to the calreticulin family. In terms of assembly, component of an EIF2 complex at least composed of CELF1/CUGBP1, CALR, CALR3, EIF2S1, EIF2S2, HSP90B1 and HSPA5. As to expression, testis specific, absent in mature sperm.

Its subcellular location is the endoplasmic reticulum lumen. CALR3 capacity for calcium-binding may be absent or much lower than that of CALR. During spermatogenesis, may act as a lectin-independent chaperone for specific client proteins such as ADAM3. Required for sperm fertility. This Mus musculus (Mouse) protein is Calreticulin-3 (Calr3).